The primary structure comprises 382 residues: Mannitol-1-phosphate 5-dehydrogenase (382 aa).

3 to 14 provides a ligand contact to NAD(+); the sequence is ALHFGAGNIGRG. An N6-acetyllysine modification is found at Lys269.

Belongs to the mannitol dehydrogenase family.

It catalyses the reaction D-mannitol 1-phosphate + NAD(+) = beta-D-fructose 6-phosphate + NADH + H(+). The sequence is that of Mannitol-1-phosphate 5-dehydrogenase from Shigella sonnei (strain Ss046).